Reading from the N-terminus, the 370-residue chain is GTPase Obg (370 aa).

Residues 1 to 159 enclose the Obg domain; it reads MKFIDEARIE…RKLKLELKVL (159 aa). Residues 129-148 are disordered; the sequence is HFKSSTNRAPRQKTNGKSGE. The segment covering 130 to 145 has biased composition (polar residues); sequence FKSSTNRAPRQKTNGK. The OBG-type G domain occupies 160–334; the sequence is ADVGLLGMPN…LCYSLQDYLD (175 aa). Residues 166–173, 191–195, 213–216, 284–287, and 315–317 contribute to the GTP site; these read GMPNAGKS, FTTLH, DIPG, NKVD, and SAL. Mg(2+)-binding residues include serine 173 and threonine 193.

It belongs to the TRAFAC class OBG-HflX-like GTPase superfamily. OBG GTPase family. As to quaternary structure, monomer. Mg(2+) serves as cofactor.

Its subcellular location is the cytoplasm. Its function is as follows. An essential GTPase which binds GTP, GDP and possibly (p)ppGpp with moderate affinity, with high nucleotide exchange rates and a fairly low GTP hydrolysis rate. Plays a role in control of the cell cycle, stress response, ribosome biogenesis and in those bacteria that undergo differentiation, in morphogenesis control. This chain is GTPase Obg, found in Polynucleobacter necessarius subsp. necessarius (strain STIR1).